The sequence spans 673 residues: DNA ligase (673 aa).

NAD(+) is bound by residues 34-38 (DAEYD), 83-84 (SL), and Glu116. Lys118 acts as the N6-AMP-lysine intermediate in catalysis. Residues Arg139, Glu176, Lys293, and Lys317 each contribute to the NAD(+) site. Zn(2+) is bound by residues Cys411, Cys414, Cys429, and Cys435. Residues 595–673 (NQQNPFFGKT…EDEFLKWVNS (79 aa)) enclose the BRCT domain.

Belongs to the NAD-dependent DNA ligase family. LigA subfamily. Requires Mg(2+) as cofactor. The cofactor is Mn(2+).

The enzyme catalyses NAD(+) + (deoxyribonucleotide)n-3'-hydroxyl + 5'-phospho-(deoxyribonucleotide)m = (deoxyribonucleotide)n+m + AMP + beta-nicotinamide D-nucleotide.. DNA ligase that catalyzes the formation of phosphodiester linkages between 5'-phosphoryl and 3'-hydroxyl groups in double-stranded DNA using NAD as a coenzyme and as the energy source for the reaction. It is essential for DNA replication and repair of damaged DNA. The polypeptide is DNA ligase (Legionella pneumophila (strain Lens)).